We begin with the raw amino-acid sequence, 85 residues long: U4-theraphotoxin-Hhn1j (85 aa).

Positions 1 to 22 (MKVTLIAILTCAAVLVLHTTAA) are cleaved as a signal peptide. Residues 23–48 (EELEAESQLMEVGMPDTELAAVDEER) constitute a propeptide that is removed on maturation. Disulfide bonds link Cys52-Cys66, Cys56-Cys77, and Cys71-Cys82.

This sequence belongs to the neurotoxin 12 (Hwtx-2) family. 02 (Hwtx-2) subfamily. In terms of tissue distribution, expressed by the venom gland.

It localises to the secreted. Its function is as follows. Postsynaptic neurotoxin. In Cyriopagopus hainanus (Chinese bird spider), this protein is U4-theraphotoxin-Hhn1j.